Reading from the N-terminus, the 115-residue chain is Probable 4-amino-4-deoxy-L-arabinose-phosphoundecaprenol flippase subunit ArnE (115 aa).

4 helical membrane-spanning segments follow: residues 1–21, 43–63, 65–85, and 93–113; these read MIVG…GQLC, WLAL…NVLQ, LPLS…TLAA, and TTAR…LMSI. In terms of domain architecture, EamA spans 44–113; it reads LALAVLLLGL…IMLGILLMSI (70 aa).

It belongs to the ArnE family. In terms of assembly, heterodimer of ArnE and ArnF.

Its subcellular location is the cell inner membrane. Its pathway is bacterial outer membrane biogenesis; lipopolysaccharide biosynthesis. Functionally, translocates 4-amino-4-deoxy-L-arabinose-phosphoundecaprenol (alpha-L-Ara4N-phosphoundecaprenol) from the cytoplasmic to the periplasmic side of the inner membrane. In Serratia proteamaculans (strain 568), this protein is Probable 4-amino-4-deoxy-L-arabinose-phosphoundecaprenol flippase subunit ArnE.